A 1230-amino-acid chain; its full sequence is Cullin-associated NEDD8-dissociated protein 1 (1230 aa).

An N-acetylalanine modification is found at Ala-2. HEAT repeat units follow at residues 2-39 (ASAS…KDSI), 44-81 (DSER…KVKE), 83-119 (QVET…ELPP), 131-165 (CKKI…LSRQ), 171-208 (NFHP…SCGN), 210-247 (VFVG…QAGH), 248-282 (RIGE…FESF), 289-366 (EVYP…TRHE), 370-407 (EFYK…QTRP), 424-467 (PLTM…VLPG), 471-510 (QHIP…NHSP), and 515-552 (PHVQ…VIRP). Lys-55 carries the N6-acetyllysine modification. Residues 315–343 (DEDEDENAMDADGGDDDDQGSDDEYSDDG) form a disordered region. Ser-335 is modified (phosphoserine). The residue at position 558 (Ser-558) is a Phosphoserine. 15 HEAT repeats span residues 563–602 (PYIK…NLGD), 606–643 (SDLP…LKID), 646–683 (PVLG…NYSD), 688–725 (AMID…VYPS), 729–768 (KISG…TGTN), 770–808 (LGYM…ALTR), 809–845 (ACPK…LGEV), 852–889 (SGQL…GNLP), 890–927 (EYLP…GLKP), 928–960 (YVEN…KLTL), 961–998 (IDPE…DHPQ), 1002–1039 (PLLK…NKPS), 1043–1097 (DLLD…DSCL), 1099–1133 (RLDI…LSTL), and 1140–1189 (QRLD…IPEA). An N6-acetyllysine modification is found at Lys-971.

It belongs to the CAND family. Interacts with TBP. Part of a complex that contains CUL1 and RBX1. Interacts with unneddylated cullins: interacts with CUL1, CUL2, CUL3, CUL4A, CUL4B and CUL5. Does not bind neddylated CUL1. Interaction with cullins is abolished in presence of COMMD1, which antagonizes with CAND1 for interacting with cullins. Interacts with ERCC6. Interacts with DCUN1D1, DCUN1D2, DCUN1D3, DCUN1D4 and DCUN1D5; these interactions are bridged by cullins and strongly inhibits the neddylation of cullins.

Its subcellular location is the cytoplasm. It localises to the nucleus. Key assembly factor of SCF (SKP1-CUL1-F-box protein) E3 ubiquitin ligase complexes that promotes the exchange of the substrate-recognition F-box subunit in SCF complexes, thereby playing a key role in the cellular repertoire of SCF complexes. Acts as a F-box protein exchange factor. The exchange activity of CAND1 is coupled with cycles of neddylation conjugation: in the deneddylated state, cullin-binding CAND1 binds CUL1-RBX1, increasing dissociation of the SCF complex and promoting exchange of the F-box protein. Probably plays a similar role in other cullin-RING E3 ubiquitin ligase complexes. The sequence is that of Cullin-associated NEDD8-dissociated protein 1 (CAND1) from Pongo abelii (Sumatran orangutan).